The chain runs to 123 residues: Small ribosomal subunit protein uS13 (123 aa).

Belongs to the universal ribosomal protein uS13 family. In terms of assembly, part of the 30S ribosomal subunit. Forms a loose heterodimer with protein S19. Forms two bridges to the 50S subunit in the 70S ribosome.

Functionally, located at the top of the head of the 30S subunit, it contacts several helices of the 16S rRNA. In the 70S ribosome it contacts the 23S rRNA (bridge B1a) and protein L5 of the 50S subunit (bridge B1b), connecting the 2 subunits; these bridges are implicated in subunit movement. Contacts the tRNAs in the A and P-sites. The chain is Small ribosomal subunit protein uS13 from Neorickettsia sennetsu (strain ATCC VR-367 / Miyayama) (Ehrlichia sennetsu).